We begin with the raw amino-acid sequence, 103 residues long: Large ribosomal subunit protein bL25 (103 aa).

Belongs to the bacterial ribosomal protein bL25 family. Part of the 50S ribosomal subunit; part of the 5S rRNA/L5/L18/L25 subcomplex. Contacts the 5S rRNA. Binds to the 5S rRNA independently of L5 and L18.

This is one of the proteins that binds to the 5S RNA in the ribosome where it forms part of the central protuberance. The protein is Large ribosomal subunit protein bL25 of Blochmanniella floridana.